Consider the following 125-residue polypeptide: Antitoxin MazE5 (125 aa).

In terms of assembly, forms a complex with cognate toxin MazF5.

In terms of biological role, antitoxin component of a type II toxin-antitoxin (TA) system. Upon expression in M.smegmatis neutralizes the effect of cognate toxin MazF5. This Mycobacterium tuberculosis (strain ATCC 25618 / H37Rv) protein is Antitoxin MazE5 (mazE5).